A 227-amino-acid chain; its full sequence is Probable septum site-determining protein MinC (227 aa).

Belongs to the MinC family. Interacts with MinD and FtsZ.

Functionally, cell division inhibitor that blocks the formation of polar Z ring septums. Rapidly oscillates between the poles of the cell to destabilize FtsZ filaments that have formed before they mature into polar Z rings. Prevents FtsZ polymerization. The chain is Probable septum site-determining protein MinC from Geobacillus kaustophilus (strain HTA426).